Reading from the N-terminus, the 329-residue chain is Flotillin-like protein FloA (329 aa).

2 helical membrane passes run 4 to 24 (IGFIIIAVIIVVALLILFSFV) and 26 to 46 (VGLWISALAAGVHVGIGTLVG).

This sequence belongs to the flotillin-like FloA family. In terms of assembly, homooligomerizes.

It localises to the cell membrane. The protein resides in the membrane raft. In terms of biological role, found in functional membrane microdomains (FMM) that may be equivalent to eukaryotic membrane rafts. FMMs are highly dynamic and increase in number as cells age. Flotillins are thought to be important factors in membrane fluidity. This Staphylococcus epidermidis (strain ATCC 35984 / DSM 28319 / BCRC 17069 / CCUG 31568 / BM 3577 / RP62A) protein is Flotillin-like protein FloA.